Consider the following 477-residue polypeptide: Cytochrome c oxidase subunit 1 (477 aa).

Residues 16–36 traverse the membrane as a helical segment; the sequence is VGTMYLMLGMWSGFGGLNLSW. 2 residues coordinate Ca(2+): E41 and G46. H62 lines the Fe(II)-heme a pocket. 6 consecutive transmembrane segments (helical) span residues 64 to 84, 101 to 121, 149 to 171, 185 to 205, 236 to 256, and 269 to 289; these read IMMI…NWLL, FSFW…FIDY, ILGL…VTFL, LFVW…PVLA, LFWF…FGLV, and VFGS…GFIV. Cu cation is bound at residue H242. Positions 242–246 form a cross-link, 1'-histidyl-3'-tyrosine (His-Tyr); it reads HPEVY. Residue Y246 coordinates O2. Cu cation contacts are provided by H292 and H293. A run of 2 helical transmembrane segments spans residues 309–329 and 340–360; these read AVTM…IATI and TLWV…GVIL. Mg(2+) contacts are provided by H370 and D371. H378 provides a ligand contact to heme a3. A Fe(II)-heme a-binding site is contributed by H380. The next 2 membrane-spanning stretches (helical) occupy residues 382-402 and 416-436; these read VLSM…FPFF and FFLT…LGLG. Residue P443 coordinates Ca(2+). The helical transmembrane segment at 455–475 threads the bilayer; sequence WSTIGCAMVMVSVSLFIHMQW.

It belongs to the heme-copper respiratory oxidase family. As to quaternary structure, component of the cytochrome c oxidase (complex IV, CIV), a multisubunit enzyme composed of a catalytic core of 3 subunits and several supernumerary subunits. The complex exists as a monomer or a dimer and forms supercomplexes (SCs) in the inner mitochondrial membrane with ubiquinol-cytochrome c oxidoreductase (cytochrome b-c1 complex, complex III, CIII). Heme serves as cofactor. Requires Cu cation as cofactor.

Its subcellular location is the mitochondrion inner membrane. The catalysed reaction is 4 Fe(II)-[cytochrome c] + O2 + 8 H(+)(in) = 4 Fe(III)-[cytochrome c] + 2 H2O + 4 H(+)(out). It functions in the pathway energy metabolism; oxidative phosphorylation. Functionally, component of the cytochrome c oxidase, the last enzyme in the mitochondrial electron transport chain which drives oxidative phosphorylation. The respiratory chain contains 3 multisubunit complexes succinate dehydrogenase (complex II, CII), ubiquinol-cytochrome c oxidoreductase (cytochrome b-c1 complex, complex III, CIII) and cytochrome c oxidase (complex IV, CIV), that cooperate to transfer electrons derived from NADH and succinate to molecular oxygen, creating an electrochemical gradient over the inner membrane that drives transmembrane transport and the ATP synthase. Cytochrome c oxidase is the component of the respiratory chain that catalyzes the reduction of oxygen to water. Electrons originating from reduced cytochrome c in the intermembrane space (IMS) are transferred via the dinuclear copper A center (CU(A)) of subunit 2 and heme A of subunit 1 to the active site in subunit 1, a binuclear center (BNC) formed by heme A3 and copper B (CU(B)). The BNC reduces molecular oxygen to 2 water molecules using 4 electrons from cytochrome c in the IMS and 4 protons from the mitochondrial matrix. This chain is Cytochrome c oxidase subunit 1 (COI), found in Pecten maximus (King scallop).